Reading from the N-terminus, the 244-residue chain is 7-cyano-7-deazaguanine synthase (244 aa).

14–24 (FSGGQDSATCV) lines the ATP pocket. Zn(2+) is bound by residues Cys202, Cys217, Cys220, and Cys223.

It belongs to the QueC family. Requires Zn(2+) as cofactor.

The catalysed reaction is 7-carboxy-7-deazaguanine + NH4(+) + ATP = 7-cyano-7-deazaguanine + ADP + phosphate + H2O + H(+). It functions in the pathway purine metabolism; 7-cyano-7-deazaguanine biosynthesis. Catalyzes the ATP-dependent conversion of 7-carboxy-7-deazaguanine (CDG) to 7-cyano-7-deazaguanine (preQ(0)). The polypeptide is 7-cyano-7-deazaguanine synthase (Burkholderia cenocepacia (strain ATCC BAA-245 / DSM 16553 / LMG 16656 / NCTC 13227 / J2315 / CF5610) (Burkholderia cepacia (strain J2315))).